Here is a 353-residue protein sequence, read N- to C-terminus: Dimethylsulfoniopropionate lyase 2 (353 aa).

Catalysis depends on proton donor/acceptor residues Cys-125 and Cys-274. Positions 326–353 (DPNETDVSKGRPTKAEHRFGPEFEEMLQ) are disordered. Residues 331–346 (DVSKGRPTKAEHRFGP) are compositionally biased toward basic and acidic residues.

The protein belongs to the aspartate/glutamate racemases family. ALMA1 subfamily. Homotetramer.

The enzyme catalyses S,S-dimethyl-beta-propiothetin = acrylate + dimethyl sulfide + H(+). Its function is as follows. Mediates cleavage of dimethylsulfoniopropionate (DMSP) into dimethyl sulfide (DMS) and acrylate. DMS is the principal form by which sulfur is transported from oceans to the atmosphere and is a key component of the ocean sulfur cycle. This is Dimethylsulfoniopropionate lyase 2 from Emiliania huxleyi (strain CCMP1516).